Reading from the N-terminus, the 38-residue chain is Photosystem II reaction center protein L (38 aa).

The helical transmembrane segment at 17–37 threads the bilayer; that stretch reads SLYWGLLLIFVLAVLFSNYFF.

This sequence belongs to the PsbL family. As to quaternary structure, PSII is composed of 1 copy each of membrane proteins PsbA, PsbB, PsbC, PsbD, PsbE, PsbF, PsbH, PsbI, PsbJ, PsbK, PsbL, PsbM, PsbT, PsbX, PsbY, PsbZ, Psb30/Ycf12, at least 3 peripheral proteins of the oxygen-evolving complex and a large number of cofactors. It forms dimeric complexes.

It is found in the plastid. The protein localises to the chloroplast thylakoid membrane. One of the components of the core complex of photosystem II (PSII). PSII is a light-driven water:plastoquinone oxidoreductase that uses light energy to abstract electrons from H(2)O, generating O(2) and a proton gradient subsequently used for ATP formation. It consists of a core antenna complex that captures photons, and an electron transfer chain that converts photonic excitation into a charge separation. This subunit is found at the monomer-monomer interface and is required for correct PSII assembly and/or dimerization. This is Photosystem II reaction center protein L from Ananas comosus (Pineapple).